A 369-amino-acid polypeptide reads, in one-letter code: 4-hydroxy-3-methylbut-2-en-1-yl diphosphate synthase (flavodoxin) (369 aa).

Residues cysteine 270, cysteine 273, cysteine 305, and glutamate 312 each contribute to the [4Fe-4S] cluster site.

This sequence belongs to the IspG family. [4Fe-4S] cluster is required as a cofactor.

It carries out the reaction (2E)-4-hydroxy-3-methylbut-2-enyl diphosphate + oxidized [flavodoxin] + H2O + 2 H(+) = 2-C-methyl-D-erythritol 2,4-cyclic diphosphate + reduced [flavodoxin]. The protein operates within isoprenoid biosynthesis; isopentenyl diphosphate biosynthesis via DXP pathway; isopentenyl diphosphate from 1-deoxy-D-xylulose 5-phosphate: step 5/6. Its function is as follows. Converts 2C-methyl-D-erythritol 2,4-cyclodiphosphate (ME-2,4cPP) into 1-hydroxy-2-methyl-2-(E)-butenyl 4-diphosphate. This chain is 4-hydroxy-3-methylbut-2-en-1-yl diphosphate synthase (flavodoxin), found in Pseudomonas fluorescens (strain SBW25).